The sequence spans 148 residues: UPF0179 protein UNCMA_27840 (148 aa).

It belongs to the UPF0179 family.

In Methanocella arvoryzae (strain DSM 22066 / NBRC 105507 / MRE50), this protein is UPF0179 protein UNCMA_27840.